Here is a 105-residue protein sequence, read N- to C-terminus: Nucleoid-associated protein ABO_1774 (105 aa).

A disordered region spans residues Gln-85–Pro-105.

The protein belongs to the YbaB/EbfC family. In terms of assembly, homodimer.

Its subcellular location is the cytoplasm. The protein resides in the nucleoid. Its function is as follows. Binds to DNA and alters its conformation. May be involved in regulation of gene expression, nucleoid organization and DNA protection. The chain is Nucleoid-associated protein ABO_1774 from Alcanivorax borkumensis (strain ATCC 700651 / DSM 11573 / NCIMB 13689 / SK2).